The primary structure comprises 563 residues: Tripeptidyl-peptidase 1 (563 aa).

The N-terminal stretch at 1 to 19 (MGLQARFLGLLALVIAGKC) is a signal peptide. Positions 20–195 (THSPEPDQRW…PEPQGVGPVG (176 aa)) are cleaved as a propeptide — removed in mature form. The cysteines at positions 111 and 122 are disulfide-linked. Positions 199 to 563 (GVTPSVLRQR…PALLKTLLNP (365 aa)) constitute a Peptidase S53 domain. N-linked (GlcNAc...) asparagine glycosylation is found at Asn-210 and Asn-222. Residues Glu-272 and Asp-276 each act as charge relay system in the active site. N-linked (GlcNAc...) asparagine glycosylation is found at Asn-286, Asn-313, and Asn-443. Disulfide bonds link Cys-365–Cys-526 and Cys-522–Cys-537. Residue Ser-475 is the Charge relay system of the active site. Ca(2+) contacts are provided by Asp-517 and Val-518. Ca(2+)-binding residues include Gly-539, Gly-541, and Asp-543.

Monomer. Interacts with CLN5. Interacts with CLN3. Ca(2+) is required as a cofactor. Post-translationally, activated by autocatalytic proteolytical processing upon acidification. N-glycosylation is required for processing and activity.

The protein resides in the lysosome. It is found in the melanosome. The enzyme catalyses Release of an N-terminal tripeptide from a polypeptide, but also has endopeptidase activity.. Functionally, lysosomal serine protease with tripeptidyl-peptidase I activity. May act as a non-specific lysosomal peptidase which generates tripeptides from the breakdown products produced by lysosomal proteinases. Requires substrates with an unsubstituted N-terminus. The sequence is that of Tripeptidyl-peptidase 1 (Tpp1) from Rattus norvegicus (Rat).